The following is a 281-amino-acid chain: Small ribosomal subunit protein uS2 (281 aa).

Residues asparagine 233–glutamate 281 are disordered. Over residues glutamate 255–alanine 275 the composition is skewed to low complexity.

It belongs to the universal ribosomal protein uS2 family.

This Bifidobacterium longum (strain DJO10A) protein is Small ribosomal subunit protein uS2.